We begin with the raw amino-acid sequence, 188 residues long: Putative adenylate kinase (188 aa).

Positions 10, 12, 13, 14, and 15 each coordinate ATP. The tract at residues 30 to 53 (HVSSFLIQNKAFSEYDELRQSYVI) is NMP. An LID region spans residues 103-113 (RRGWGELKIAE). The ATP site is built by arginine 104 and lysine 142.

This sequence belongs to the adenylate kinase family. AK6 subfamily. As to quaternary structure, interacts with uS11. Not a structural component of 40S pre-ribosomes, but transiently interacts with them by binding to uS11.

The enzyme catalyses AMP + ATP = 2 ADP. It carries out the reaction ATP + H2O = ADP + phosphate + H(+). Functionally, broad-specificity nucleoside monophosphate (NMP) kinase that catalyzes the reversible transfer of the terminal phosphate group between nucleoside triphosphates and monophosphates. Also has ATPase activity. Involved in the late maturation steps of the 30S ribosomal particles, specifically 16S rRNA maturation. While NMP activity is not required for ribosome maturation, ATPase activity is. Associates transiently with small ribosomal subunit protein uS11. ATP hydrolysis breaks the interaction with uS11. May temporarily remove uS11 from the ribosome to enable a conformational change of the ribosomal RNA that is needed for the final maturation step of the small ribosomal subunit. The protein is Putative adenylate kinase of Sulfurisphaera tokodaii (strain DSM 16993 / JCM 10545 / NBRC 100140 / 7) (Sulfolobus tokodaii).